The chain runs to 349 residues: UDP-N-acetylenolpyruvoylglucosamine reductase (349 aa).

The FAD-binding PCMH-type domain maps to 25–197; it reads GIAARARFAA…VAVTFRLPKQ (173 aa). Arg-173 is an active-site residue. Ser-249 serves as the catalytic Proton donor. Residue Glu-345 is part of the active site.

The protein belongs to the MurB family. Requires FAD as cofactor.

It localises to the cytoplasm. It catalyses the reaction UDP-N-acetyl-alpha-D-muramate + NADP(+) = UDP-N-acetyl-3-O-(1-carboxyvinyl)-alpha-D-glucosamine + NADPH + H(+). It participates in cell wall biogenesis; peptidoglycan biosynthesis. Its function is as follows. Cell wall formation. This is UDP-N-acetylenolpyruvoylglucosamine reductase from Burkholderia cenocepacia (strain HI2424).